A 297-amino-acid polypeptide reads, in one-letter code: Transcription factor LRL3 (297 aa).

Positions 59 to 109 (PDQFHHPQESGGPTMGSQEGLQPQGTVSTTSAPVVRQKPRVRARRGQATDP) are disordered. Residues 73–90 (MGSQEGLQPQGTVSTTSA) show a composition bias toward polar residues. Positions 105–118 (QATDPHSIAERLRR) are basic motif; degenerate. Residues 105 to 154 (QATDPHSIAERLRRERIAERMKSLQELVPNTNKTDKASMLDEIIEYVRFL) enclose the bHLH domain. Positions 119–154 (ERIAERMKSLQELVPNTNKTDKASMLDEIIEYVRFL) are helix-loop-helix motif.

As to quaternary structure, homodimer. As to expression, expressed in trichomes of the root maturation zone. Detected constitutively in flowers.

The protein resides in the nucleus. Functionally, transcription factor that regulates the development of root hairs. Does not seem to be involved in the regulation of sperm cell development. This chain is Transcription factor LRL3, found in Arabidopsis thaliana (Mouse-ear cress).